Consider the following 518-residue polypeptide: Cytochrome P450 monooxygenase COX1 (518 aa).

The helical transmembrane segment at 7–25 (VLIALSSIVVAYFVKTALA) threads the bilayer. N-linked (GlcNAc...) asparagine glycosylation is found at asparagine 48, asparagine 100, asparagine 292, asparagine 302, and asparagine 351. Residue cysteine 450 coordinates heme. Asparagine 457 carries N-linked (GlcNAc...) asparagine glycosylation.

Belongs to the cytochrome P450 family. It depends on heme as a cofactor.

The protein localises to the membrane. Its pathway is secondary metabolite biosynthesis. Its function is as follows. Cytochrome P450 monooxygenase; part of the gene cluster that mediates the biosynthesis of alpha-cuprenene and oxidized derivatives. The alpha-cuprenene synthase COP6 is the only sesquiterpene synthase identified in C.cinereus that appears to be part of a biosynthetic gene cluster and is highly specific since it catalyzes the cyclization of (2E,6E)-farnesyl diphosphate into only one product, alpha-cuprenene. The cytochrome P450 monooxygenase COX2 then oxidizes the cyclohexadiene ring of alpha-cuprenene at positions 1 and 4, yielding first alpha-cuparene, followed by alpha-cuparophenol and a further yet unidentified compound resulting from one additional oxidation step. The cytochrome P450 monooxygenase COX1 then likely catalyzes the oxidation at position 9 of the pentane ring of alpha-cuprenene to give the corresponding hydroxy or ketone derivatives. This chain is Cytochrome P450 monooxygenase COX1, found in Coprinopsis cinerea (strain Okayama-7 / 130 / ATCC MYA-4618 / FGSC 9003) (Inky cap fungus).